The chain runs to 553 residues: Interleukin-20 receptor subunit alpha (553 aa).

An N-terminal signal peptide occupies residues 1-29; that stretch reads MRAPGRPALRPLPLPPLLLLLLAAPWGRA. At 30-250 the chain is on the extracellular side; the sequence is VPCVSGGLPK…KDQSSEFKAK (221 aa). Fibronectin type-III domains are found at residues 37–135 and 136–242; these read LPKP…FLET and QIGP…TLKD. 6 N-linked (GlcNAc...) asparagine glycosylation sites follow: asparagine 42, asparagine 83, asparagine 91, asparagine 182, asparagine 191, and asparagine 200. Residues cysteine 87 and cysteine 95 are joined by a disulfide bond. Cysteine 215 and cysteine 236 are joined by a disulfide. A helical membrane pass occupies residues 251 to 271; that stretch reads IIFWYVLPVSITVFLFSVMGY. The Cytoplasmic segment spans residues 272–553; the sequence is SIYRYIHVGK…EWGLYVQMEN (282 aa). 2 disordered regions span residues 333 to 353 and 462 to 515; these read SSDVSSLNDPQPSGNLRPPQE and QEHT…LGEE. Residues 334 to 346 are compositionally biased toward polar residues; it reads SDVSSLNDPQPSG. Residues 499–513 are compositionally biased toward acidic residues; the sequence is QDSEGCEPSEGDGLG.

This sequence belongs to the type II cytokine receptor family. As to quaternary structure, heterodimer with IL20RB and heterodimer with IL10RB. In terms of tissue distribution, widely expressed with highest levels in skin and testis and high levels in brain. Highly expressed in psoriatic skin.

It is found in the membrane. The IL20RA/IL20RB dimer is a receptor for IL19, IL20 and IL24. The IL20RA/IL10RB dimer is a receptor for IL26. The chain is Interleukin-20 receptor subunit alpha (IL20RA) from Homo sapiens (Human).